Here is an 80-residue protein sequence, read N- to C-terminus: RNA-binding protein Hfq (80 aa).

Residues 10 to 70 (DIFLNNARKE…ISTVSPAKPI (61 aa)) form the Sm domain.

This sequence belongs to the Hfq family. In terms of assembly, homohexamer.

Functionally, RNA chaperone that binds small regulatory RNA (sRNAs) and mRNAs to facilitate mRNA translational regulation in response to envelope stress, environmental stress and changes in metabolite concentrations. Also binds with high specificity to tRNAs. This is RNA-binding protein Hfq from Clostridium perfringens (strain SM101 / Type A).